Reading from the N-terminus, the 254-residue chain is Phosphoribosylaminoimidazole-succinocarboxamide synthase (254 aa).

The protein belongs to the SAICAR synthetase family.

It catalyses the reaction 5-amino-1-(5-phospho-D-ribosyl)imidazole-4-carboxylate + L-aspartate + ATP = (2S)-2-[5-amino-1-(5-phospho-beta-D-ribosyl)imidazole-4-carboxamido]succinate + ADP + phosphate + 2 H(+). The protein operates within purine metabolism; IMP biosynthesis via de novo pathway; 5-amino-1-(5-phospho-D-ribosyl)imidazole-4-carboxamide from 5-amino-1-(5-phospho-D-ribosyl)imidazole-4-carboxylate: step 1/2. This is Phosphoribosylaminoimidazole-succinocarboxamide synthase from Brucella anthropi (strain ATCC 49188 / DSM 6882 / CCUG 24695 / JCM 21032 / LMG 3331 / NBRC 15819 / NCTC 12168 / Alc 37) (Ochrobactrum anthropi).